A 356-amino-acid polypeptide reads, in one-letter code: Putative transposase y4zB (356 aa).

Positions 1–19 (MITTGTPTTRRSAAGTAGA) are enriched in low complexity. Disordered stretches follow at residues 1–54 (MITT…PLAD) and 334–356 (PPPV…FAYV).

Belongs to the transposase 11 family.

The protein is Putative transposase y4zB of Sinorhizobium fredii (strain NBRC 101917 / NGR234).